We begin with the raw amino-acid sequence, 293 residues long: Glutamine sensor pib2 (293 aa).

The disordered stretch occupies residues 38 to 75 (APTRQATNGTGSVSGSPNSSSNSTPANQGSLPSHTNPQ). Over residues 44-62 (TNGTGSVSGSPNSSSNSTP) the composition is skewed to low complexity. A compositionally biased stretch (polar residues) spans 63–75 (ANQGSLPSHTNPQ). Residues 156–220 (DVSVCSFPSC…SCVSCFYEYL (65 aa)) form an FYVE-type; degenerate zinc finger. Zn(2+)-binding residues include Cys-178, Cys-181, Cys-212, and Cys-215. Polar residues predominate over residues 242–256 (APQQATTHPPSQPKN). The segment at 242 to 276 (APQQATTHPPSQPKNAVSVPIPKMDSTDSKGELPS) is disordered. Position 259 is a phosphoserine (Ser-259).

Interacts with the TORC1 complex when activated by glutamine or cysteine.

It localises to the vacuole membrane. With respect to regulation, activated by glutamine. Functionally, functions as an intracellular glutamine sensor that directly activates the TORC1 signaling pathway, to promote cell growth when glutamine is available. The polypeptide is Glutamine sensor pib2 (Schizosaccharomyces pombe (strain 972 / ATCC 24843) (Fission yeast)).